A 239-amino-acid chain; its full sequence is tRNA1(Val) (adenine(37)-N6)-methyltransferase (239 aa).

It belongs to the methyltransferase superfamily. tRNA (adenine-N(6)-)-methyltransferase family.

Its subcellular location is the cytoplasm. It catalyses the reaction adenosine(37) in tRNA1(Val) + S-adenosyl-L-methionine = N(6)-methyladenosine(37) in tRNA1(Val) + S-adenosyl-L-homocysteine + H(+). Specifically methylates the adenine in position 37 of tRNA(1)(Val) (anticodon cmo5UAC). The protein is tRNA1(Val) (adenine(37)-N6)-methyltransferase of Vibrio vulnificus (strain CMCP6).